Reading from the N-terminus, the 151-residue chain is SsrA-binding protein (151 aa).

This sequence belongs to the SmpB family.

It is found in the cytoplasm. Its function is as follows. Required for rescue of stalled ribosomes mediated by trans-translation. Binds to transfer-messenger RNA (tmRNA), required for stable association of tmRNA with ribosomes. tmRNA and SmpB together mimic tRNA shape, replacing the anticodon stem-loop with SmpB. tmRNA is encoded by the ssrA gene; the 2 termini fold to resemble tRNA(Ala) and it encodes a 'tag peptide', a short internal open reading frame. During trans-translation Ala-aminoacylated tmRNA acts like a tRNA, entering the A-site of stalled ribosomes, displacing the stalled mRNA. The ribosome then switches to translate the ORF on the tmRNA; the nascent peptide is terminated with the 'tag peptide' encoded by the tmRNA and targeted for degradation. The ribosome is freed to recommence translation, which seems to be the essential function of trans-translation. The chain is SsrA-binding protein from Chlamydia muridarum (strain MoPn / Nigg).